Consider the following 469-residue polypeptide: Glutamate--tRNA ligase (469 aa).

The 'HIGH' region motif lies at 11–21 (PSPTGFIHLGN). The short motif at 243–247 (KMSKR) is the 'KMSKS' region element. K246 serves as a coordination point for ATP.

Belongs to the class-I aminoacyl-tRNA synthetase family. Glutamate--tRNA ligase type 1 subfamily. Monomer.

It localises to the cytoplasm. It carries out the reaction tRNA(Glu) + L-glutamate + ATP = L-glutamyl-tRNA(Glu) + AMP + diphosphate. In terms of biological role, catalyzes the attachment of glutamate to tRNA(Glu) in a two-step reaction: glutamate is first activated by ATP to form Glu-AMP and then transferred to the acceptor end of tRNA(Glu). The polypeptide is Glutamate--tRNA ligase (Burkholderia cenocepacia (strain HI2424)).